We begin with the raw amino-acid sequence, 165 residues long: Large ribosomal subunit protein uL10 (165 aa).

The protein belongs to the universal ribosomal protein uL10 family. As to quaternary structure, part of the ribosomal stalk of the 50S ribosomal subunit. The N-terminus interacts with L11 and the large rRNA to form the base of the stalk. The C-terminus forms an elongated spine to which L12 dimers bind in a sequential fashion forming a multimeric L10(L12)X complex.

Functionally, forms part of the ribosomal stalk, playing a central role in the interaction of the ribosome with GTP-bound translation factors. The polypeptide is Large ribosomal subunit protein uL10 (Shewanella piezotolerans (strain WP3 / JCM 13877)).